A 130-amino-acid chain; its full sequence is Small ribosomal subunit protein uS11c (130 aa).

This sequence belongs to the universal ribosomal protein uS11 family. As to quaternary structure, part of the 30S ribosomal subunit.

Its subcellular location is the plastid. It localises to the chloroplast. The polypeptide is Small ribosomal subunit protein uS11c (Pinus thunbergii (Japanese black pine)).